The following is a 191-amino-acid chain: Large ribosomal subunit protein bL9c (191 aa).

The N-terminal 35 residues, 1 to 35 (MASPSCASTLPWTAAAFSYPRRLQTRRAPSLVIVA), are a transit peptide targeting the chloroplast.

This sequence belongs to the bacterial ribosomal protein bL9 family. As to quaternary structure, part of the 50S ribosomal subunit.

The protein localises to the plastid. The protein resides in the chloroplast. Binds to the 23S rRNA. The sequence is that of Large ribosomal subunit protein bL9c (RPL9) from Triticum aestivum (Wheat).